The chain runs to 333 residues: Trans-enoyl reductase apdC (333 aa).

45-48 (FDAK) lines the NADP(+) pocket. Residue 131-138 (VGLATVGM) coordinates substrate. NADP(+)-binding positions include 167-170 (SPHN), Tyr185, and 232-233 (LD). 252–256 (SVTMY) contributes to the substrate binding site. 321-322 (VS) contacts NADP(+).

This sequence belongs to the zinc-containing alcohol dehydrogenase family. Monomer.

Its pathway is secondary metabolite biosynthesis. Functionally, trans-enoyl reductase; part of the gene cluster that mediates the biosynthesis of aspyridones. The polyketide-amino acid backbone preaspyridone A is first assembled by the PKS-NRPS hybrid apdA. The assembly of preaspyridone A is initiated by loading of malonyl-CoA onto apdA, followed by decarboxylation to yield the acetyl starter unit. The growing polyketide chain then elongates into a tetraketide. The adpA PKS module catalyzes three Claisen condensations, as well as beta-keto processing and methylation. Alpha-methylation step during polyketide synthesis is a prerequisite and a key checkpoint for chain transfer between PKS and NRPS modules. The downstream NRPS module contains the condensation (C), adenylation (A), and thiolation (T) domains and catalyzes the incorporation of tyrosine via the formation of the L-tyrosinyl-thioester and the amide linkage between L-tyrosinyl-thioester and the tetraketide. The bimodular assembly line is terminated with a reductase (R) domain that facilitates formation and release of the tetramic acid product. Because apdA lacks a designated enoylreductase (ER) domain, the required activity is provided the enoyl reductase apdC. ApdC appears to operate with different stereoselectivity in different PKS cycle. Combined with apdC, apdA is proposed to synthesize preaspyridone A via about 20 enzymatic steps. A number of oxidative steps performed successively by the cytochrome P450 monooxygenases apdE and apdB are required for the conversion of preaspyridone A to aspyridone A. The cytochrome P450 monooxygenase apdE is responsible for the oxidative dephenylation of preaspyridone A. Finally, the predicted FAD-dependent monooxygenase apdD and the acyl-CoA dehydrogenase apdG may be involved in the transformation of aspyridone A into aspyridone B. The chain is Trans-enoyl reductase apdC from Emericella nidulans (strain FGSC A4 / ATCC 38163 / CBS 112.46 / NRRL 194 / M139) (Aspergillus nidulans).